The sequence spans 532 residues: Amidophosphoribosyltransferase 3, chloroplastic (532 aa).

A chloroplast-targeting transit peptide spans 1–59 (MAFSVEEISSILPNSLSANPRNVSQNTISPSFFKPSLKPYASKTLISLSCRRSLSPVFS). C77 functions as the Nucleophile in the catalytic mechanism. The 220-residue stretch at 77-296 (CGVVGIHGDP…PGEIVVVDRN (220 aa)) folds into the Glutamine amidotransferase type-2 domain. [4Fe-4S] cluster-binding residues include C313, C459, C511, and C514.

The protein in the C-terminal section; belongs to the purine/pyrimidine phosphoribosyltransferase family. Requires [4Fe-4S] cluster as cofactor. Mg(2+) is required as a cofactor. As to expression, mostly expressed at low levels in leaves, and, to a lower extent, in cotyledons.

The protein localises to the plastid. The protein resides in the chloroplast stroma. It carries out the reaction 5-phospho-beta-D-ribosylamine + L-glutamate + diphosphate = 5-phospho-alpha-D-ribose 1-diphosphate + L-glutamine + H2O. Its pathway is purine metabolism; IMP biosynthesis via de novo pathway; N(1)-(5-phospho-D-ribosyl)glycinamide from 5-phospho-alpha-D-ribose 1-diphosphate: step 1/2. Inhibited by the phenyltriazole acetic acid compound [5-(4-chlorophenyl)-1-isopropyl-1H-[1,2,4]triazol-3-yl]-acetic acid (DAS734), a bleaching herbicide. Repressed by AMP, ADP, ATP and GTP, and slightly by GMP. Catalyzes the first committed step of 'de novo' purine biosynthesis from glutamine. The polypeptide is Amidophosphoribosyltransferase 3, chloroplastic (ASE3) (Arabidopsis thaliana (Mouse-ear cress)).